A 146-amino-acid chain; its full sequence is Angiogenin (146 aa).

A signal peptide spans 1-24 (MVMGPHLLLLVFILGLGLTPPTLA). Gln25 is subject to Pyrrolidone carboxylic acid. Residue His37 is the Proton acceptor of the active site. Disulfide bonds link Cys50/Cys105, Cys63/Cys116, and Cys81/Cys131. Positions 55–59 (RLRNM) match the Nucleolar localization signal motif. TRNA contacts are provided by Cys105 and Ile127. His138 (proton donor) is an active-site residue.

It belongs to the pancreatic ribonuclease family. Homodimer. Interacts with RNH1; inhibiting ANG ribonuclease activity. Interacts with PCNA.

It is found in the secreted. The protein resides in the nucleus. The protein localises to the nucleolus. It localises to the cytoplasm. Its subcellular location is the stress granule. Its activity is regulated as follows. Has weak tRNA ribonuclease activity by itself due to partial autoinhibition by its C-terminus, which folds into a short alpha-helix that partially occludes the substrate-binding site. In absence of stress, the ribonuclease activity is inhibited by RNH1 in the cytoplasm. In response to stress, dissociates from RNH1 in the cytoplasm and associates with cytoplasmic ribosomes with vacant A-sites: ribosomes directly activate the tRNA ribonuclease activity of ANG by refolding the C-terminal alpha-helix. In response to stress, the angiogenic activity of ANG is inhibited by RNH1 in the nucleus. Its function is as follows. Secreted ribonuclease that can either promote or restrict cell proliferation of target cells, depending on the context. Endocytosed in target cells via its receptor PLXNB2 and translocates to the cytoplasm or nucleus. Under stress conditions, localizes to the cytoplasm and promotes the assembly of stress granules (SGs): specifically cleaves a subset of tRNAs within anticodon loops to produce tRNA-derived stress-induced fragments (tiRNAs), resulting in translation repression and inhibition of cell proliferation. tiRNas also prevent formation of apoptosome, thereby promoting cell survival. Preferentially cleaves RNAs between a pyrimidine and an adenosine residue, suggesting that it cleaves the anticodon loop of tRNA(Ala) (32-UUAGCAU-38) after positions 33 and 36. Cleaves a subset of tRNAs, including tRNA(Ala), tRNA(Glu), tRNA(Gly), tRNA(Lys), tRNA(Val), tRNA(His), tRNA(Asp) and tRNA(Sec). Under growth conditions and in differentiated cells, translocates to the nucleus and stimulates ribosomal RNA (rRNA) transcription, including that containing the initiation site sequences of 45S rRNA, thereby promoting cell growth and proliferation. Angiogenin induces vascularization of normal and malignant tissues via its ability to promote rRNA transcription. Involved in hematopoietic stem and progenitor cell (HSPC) growth and survival by promoting rRNA transcription in growth conditions and inhibiting translation in response to stress, respectively. Mediates the crosstalk between myeloid and intestinal epithelial cells to protect the intestinal epithelial barrier integrity: secreted by myeloid cells and promotes intestinal epithelial cells proliferation and survival. Also mediates osteoclast-endothelial cell crosstalk in growing bone: produced by osteoclasts and protects the neighboring vascular cells against senescence by promoting rRNA transcription. This Saimiri sciureus (Common squirrel monkey) protein is Angiogenin (ANG).